We begin with the raw amino-acid sequence, 79 residues long: Conotoxin Kt6.1 (79 aa).

The signal sequence occupies residues 1 to 22 (MKLTCVLIISVLFLTASQLITA). A propeptide spanning residues 23 to 47 (VYSRDKQQYRAARLRDEMRNLKGAR) is cleaved from the precursor. Disulfide bonds link Cys49–Cys62, Cys56–Cys67, and Cys61–Cys77. Pro60 and Pro63 each carry 4-hydroxyproline.

This sequence belongs to the conotoxin O1 superfamily. As to expression, expressed by the venom duct.

The protein resides in the secreted. Functionally, ion channel inhibitor that inhibits the increase in intracellular calcium upon depolarization in DRG neurons. In vivo, both intraperitoneal and intracranial injections into mice induce hyperactivity. The chain is Conotoxin Kt6.1 from Conus kintoki (Cone snail).